We begin with the raw amino-acid sequence, 392 residues long: Homoserine O-acetyltransferase (392 aa).

The AB hydrolase-1 domain occupies 52 to 356 (NVVVVLHALT…ICGHDGFLVE (305 aa)). Serine 157 acts as the Nucleophile in catalysis. Arginine 227 is a substrate binding site. Residues aspartate 320 and histidine 350 contribute to the active site. Aspartate 351 is a binding site for substrate. A disordered region spans residues 373–392 (SQSAGPGGAGPGSRKGTTRR).

Belongs to the AB hydrolase superfamily. MetX family. Homodimer.

The protein localises to the cytoplasm. It catalyses the reaction L-homoserine + acetyl-CoA = O-acetyl-L-homoserine + CoA. It functions in the pathway amino-acid biosynthesis; L-methionine biosynthesis via de novo pathway; O-acetyl-L-homoserine from L-homoserine: step 1/1. Functionally, transfers an acetyl group from acetyl-CoA to L-homoserine, forming acetyl-L-homoserine. The sequence is that of Homoserine O-acetyltransferase from Mycobacterium avium (strain 104).